Here is a 465-residue protein sequence, read N- to C-terminus: UDP-N-acetylmuramate--L-alanine ligase (465 aa).

114-120 (GAHGKTT) is a binding site for ATP.

The protein belongs to the MurCDEF family.

Its subcellular location is the cytoplasm. The enzyme catalyses UDP-N-acetyl-alpha-D-muramate + L-alanine + ATP = UDP-N-acetyl-alpha-D-muramoyl-L-alanine + ADP + phosphate + H(+). Its pathway is cell wall biogenesis; peptidoglycan biosynthesis. In terms of biological role, cell wall formation. The polypeptide is UDP-N-acetylmuramate--L-alanine ligase (Syntrophomonas wolfei subsp. wolfei (strain DSM 2245B / Goettingen)).